The following is a 280-amino-acid chain: 4-deoxy-L-threo-5-hexosulose-uronate ketol-isomerase (280 aa).

Residues H198, H200, E205, and H247 each contribute to the Zn(2+) site.

It belongs to the KduI family. It depends on Zn(2+) as a cofactor.

The enzyme catalyses 5-dehydro-4-deoxy-D-glucuronate = 3-deoxy-D-glycero-2,5-hexodiulosonate. Its pathway is glycan metabolism; pectin degradation; 2-dehydro-3-deoxy-D-gluconate from pectin: step 4/5. In terms of biological role, catalyzes the isomerization of 5-dehydro-4-deoxy-D-glucuronate to 3-deoxy-D-glycero-2,5-hexodiulosonate. This chain is 4-deoxy-L-threo-5-hexosulose-uronate ketol-isomerase, found in Bacteroides fragilis (strain YCH46).